The following is a 947-amino-acid chain: Protein translocase subunit SecA (947 aa).

ATP is bound by residues Gln87, 105-109 (GEGKT), and Asp525. The tract at residues 905–928 (PADNADKTARNPNDPSTWGKVGRN) is disordered. Cys931, Cys933, Cys942, and His943 together coordinate Zn(2+).

It belongs to the SecA family. In terms of assembly, monomer and homodimer. Part of the essential Sec protein translocation apparatus which comprises SecA, SecYEG and auxiliary proteins SecDF-YajC and YidC. Zn(2+) is required as a cofactor.

Its subcellular location is the cell inner membrane. The protein resides in the cytoplasm. The enzyme catalyses ATP + H2O + cellular proteinSide 1 = ADP + phosphate + cellular proteinSide 2.. Part of the Sec protein translocase complex. Interacts with the SecYEG preprotein conducting channel. Has a central role in coupling the hydrolysis of ATP to the transfer of proteins into and across the cell membrane, serving both as a receptor for the preprotein-SecB complex and as an ATP-driven molecular motor driving the stepwise translocation of polypeptide chains across the membrane. The sequence is that of Protein translocase subunit SecA from Rhodopseudomonas palustris (strain BisB18).